The chain runs to 201 residues: Large ribosomal subunit protein uL4 (201 aa).

Positions 44–71 (RAQKTRAEVSGSGKKPWRQKGTGRARSG) are disordered.

It belongs to the universal ribosomal protein uL4 family. As to quaternary structure, part of the 50S ribosomal subunit.

One of the primary rRNA binding proteins, this protein initially binds near the 5'-end of the 23S rRNA. It is important during the early stages of 50S assembly. It makes multiple contacts with different domains of the 23S rRNA in the assembled 50S subunit and ribosome. Its function is as follows. Forms part of the polypeptide exit tunnel. In Photorhabdus laumondii subsp. laumondii (strain DSM 15139 / CIP 105565 / TT01) (Photorhabdus luminescens subsp. laumondii), this protein is Large ribosomal subunit protein uL4.